Here is a 402-residue protein sequence, read N- to C-terminus: uncharacterized protein (402 aa).

This is an uncharacterized protein from Ostreid herpesvirus 1 (isolate France) (OsHV-1).